A 446-amino-acid chain; its full sequence is Cytochrome P450 monooxygenase ATR14 (446 aa).

Positions 403–446 (NFTYPDEFRPDRWLDDRDQKEYEHDHGDAMQPFSVGPRDCPSQK) are disordered. Residues 408 to 430 (DEFRPDRWLDDRDQKEYEHDHGD) are compositionally biased toward basic and acidic residues. Cysteine 442 lines the heme pocket.

Belongs to the cytochrome P450 family. Heme serves as cofactor.

It functions in the pathway mycotoxin biosynthesis. Functionally, cytochrome P450 monooxygenase; part of the core atranone cluster (CAC) which products are predicted to catalyze most or all steps of mycotoxin atranone synthesis, starting from geranylgeranyl pyrophosphate (GGPP). The initial cyclization of GGPP to dolabellane is probably performed by the terpene cyclase ATR13. The Baeyer-Villiger oxidation near the end of the atranone synthesis, which converts atranones D and E to atranones F and G is predicted to be catalyzed by the monooxygenase ATR8. Of the CAC's other predicted gene products, the reducing PKS ATR6 might synthesize a polyketide chain. This polyketide is probably transferred onto the atranone backbone by the polyketide transferase ATR5. Other predicted CAC products include 4 oxygenases (ATR2, ATR3, ATR4, and ATR14), 3 short-chain reductases (ATR7, ATR9, and ATR10), and a methyltransferase (ATR12). These may all be involved in the various steps of atranone biosynthesis, although their specific roles must await experimental determination. This chain is Cytochrome P450 monooxygenase ATR14, found in Stachybotrys chlorohalonatus (strain IBT 40285).